The chain runs to 208 residues: Uracil phosphoribosyltransferase (208 aa).

5-phospho-alpha-D-ribose 1-diphosphate contacts are provided by residues R78, R103, and 130–138; that span reads DPMLATGGS. Residues I193 and 198 to 200 each bind uracil; that span reads GDA. Residue D199 coordinates 5-phospho-alpha-D-ribose 1-diphosphate.

This sequence belongs to the UPRTase family. The cofactor is Mg(2+).

The catalysed reaction is UMP + diphosphate = 5-phospho-alpha-D-ribose 1-diphosphate + uracil. The protein operates within pyrimidine metabolism; UMP biosynthesis via salvage pathway; UMP from uracil: step 1/1. With respect to regulation, allosterically activated by GTP. Functionally, catalyzes the conversion of uracil and 5-phospho-alpha-D-ribose 1-diphosphate (PRPP) to UMP and diphosphate. This is Uracil phosphoribosyltransferase from Sodalis glossinidius (strain morsitans).